The chain runs to 142 residues: Large ribosomal subunit protein uL11 (142 aa).

This sequence belongs to the universal ribosomal protein uL11 family. As to quaternary structure, part of the ribosomal stalk of the 50S ribosomal subunit. Interacts with L10 and the large rRNA to form the base of the stalk. L10 forms an elongated spine to which L12 dimers bind in a sequential fashion forming a multimeric L10(L12)X complex. One or more lysine residues are methylated.

In terms of biological role, forms part of the ribosomal stalk which helps the ribosome interact with GTP-bound translation factors. The chain is Large ribosomal subunit protein uL11 from Shigella boydii serotype 18 (strain CDC 3083-94 / BS512).